The following is a 292-amino-acid chain: Nucleophosmin (292 aa).

At M1 the chain carries N-acetylmethionine. Residues M1–V117 form a necessary for interaction with APEX1 region. A required for interaction with SENP3 region spans residues M1–T185. A Phosphoserine; by PLK1 and PLK2 modification is found at S4. S10 bears the Phosphoserine mark. K27 is covalently cross-linked (Glycyl lysine isopeptide (Lys-Gly) (interchain with G-Cter in SUMO2)). N6-acetyllysine; alternate is present on K32. K32 is covalently cross-linked (Glycyl lysine isopeptide (Lys-Gly) (interchain with G-Cter in SUMO1); alternate). A Glycyl lysine isopeptide (Lys-Gly) (interchain with G-Cter in SUMO2); alternate cross-link involves residue K32. S43 bears the Phosphoserine mark. Residue Y67 is modified to Phosphotyrosine. A Phosphoserine modification is found at S70. Residues T75 and T95 each carry the phosphothreonine modification. Phosphoserine is present on residues S125 and S139. The disordered stretch occupies residues M138–K248. Residue K141 forms a Glycyl lysine isopeptide (Lys-Gly) (interchain with G-Cter in SUMO2) linkage. The residue at position 150 (K150) is an N6-acetyllysine; alternate. Residue K150 forms a Glycyl lysine isopeptide (Lys-Gly) (interchain with G-Cter in SUMO2); alternate linkage. The Nuclear localization signal motif lies at P152–K157. K154 carries the post-translational modification N6-acetyllysine. Residues D159–E186 are compositionally biased toward acidic residues. Residues E186 to K214 are interaction with NOP2. Over residues E187–P199 the composition is skewed to basic and acidic residues. Positions P190 to R196 match the Nuclear localization signal motif. Residue T198 is modified to Phosphothreonine; by CDK1 and CDK2. Residues K201–G210 are compositionally biased toward polar residues. The residue at position 206 (S206) is an ADP-ribosylserine. An N6-acetyllysine modification is found at K211. K214 participates in a covalent cross-link: Glycyl lysine isopeptide (Lys-Gly) (interchain with G-Cter in SUMO2). T217 is subject to Phosphothreonine; by CDK1. A compositionally biased stretch (basic and acidic residues) spans K221–P233. Phosphoserine is present on S225. The residue at position 227 (K227) is an N6-acetyllysine. K228 bears the N6-acetyllysine; alternate mark. K228 is covalently cross-linked (Glycyl lysine isopeptide (Lys-Gly) (interchain with G-Cter in SUMO); alternate). 2 positions are modified to phosphothreonine; by CDK1: T232 and T235. A phosphoserine mark is found at S240 and S241. A required for nucleolar localization region spans residues S241–L292. K246 is covalently cross-linked (Glycyl lysine isopeptide (Lys-Gly) (interchain with G-Cter in SUMO1); alternate). Residues K246 and K248 each participate in a glycyl lysine isopeptide (Lys-Gly) (interchain with G-Cter in SUMO2); alternate cross-link. K248 carries the post-translational modification N6-acetyllysine; alternate. Phosphoserine is present on S252. Position 255 is an N6-acetyllysine; alternate (K255). K255 is covalently cross-linked (Glycyl lysine isopeptide (Lys-Gly) (interchain with G-Cter in SUMO1); alternate). K255 participates in a covalent cross-link: Glycyl lysine isopeptide (Lys-Gly) (interchain with G-Cter in SUMO2); alternate. Phosphoserine is present on S258. Glycyl lysine isopeptide (Lys-Gly) (interchain with G-Cter in SUMO2); alternate cross-links involve residues K261, K265, and K271. K261 participates in a covalent cross-link: Glycyl lysine isopeptide (Lys-Gly) (interchain with G-Cter in SUMO); alternate. Residues K265 and K271 each carry the N6-acetyllysine; alternate modification. Residue K265 forms a Glycyl lysine isopeptide (Lys-Gly) (interchain with G-Cter in SUMO1); alternate linkage. Position 265 is an N6-succinyllysine; alternate (K265). T277 bears the Phosphothreonine mark. At K290 the chain carries N6-acetyllysine.

The protein belongs to the nucleoplasmin family. Decamer formed by two pentameric rings associated in a head-to-head fashion. Disulfide-linked dimers under certain conditions. Interacts with NSUN2 and SENP3. The SWAP complex consists of NPM1, NCL, PARP1 and SWAP70. Interacts with the methylated form of RPS10. Interacts (via N-terminal domain) with APEX1; the interaction is RNA-dependent and decreases peroxide-damaged cells. Interacts with NEK2. Interacts with ROCK2 and BRCA2. Interacts with RPGR. Interacts with CENPW. Interacts with EIF2AK2/PKR. Interacts with DDX31; this interaction prevents interaction between NPM1 and HDM2. Interacts with MYC; competitive with NOP53. Interacts with NOP53; the interaction is direct and competitive with MYC. Interacts with LRRC34. Interacts with RRP1B. Interacts with NPM3. Interacts with ALKBH2. Interacts with TTF1 (via C-terminal region). Interacts with NOP2. Interacts with ARID3C (via REKLES DOMAIN); the interaction mediates ARID3C nuclear shuttling. Acetylated at C-terminal lysine residues, thereby increasing affinity to histones. In terms of processing, ADP-ribosylated. Post-translationally, phosphorylated at Ser-4 by PLK1 and PLK2. Phosphorylation at Ser-4 by PLK2 in S phase is required for centriole duplication and is sufficient to trigger centriole replication. Phosphorylation at Ser-4 by PLK1 takes place during mitosis. Phosphorylated by CDK2 at Ser-125 and Thr-198. Phosphorylation at Thr-198 may trigger initiation of centrosome duplication. Phosphorylated by CDK1 at Thr-198, Thr-217, Thr-232 and Thr-235 during cell mitosis. When these four sites are phosphorated, RNA-binding activity seem to be abolished. May be phosphorylated at Ser-70 by NEK2. The Thr-198 phosphorylated form has higher affinity for ROCK2. Sumoylated by ARF. In terms of processing, ubiquitinated. Ubiquitination leads to proteasomal degradation. Deubiquitinated by USP36. In terms of tissue distribution, expressed in B-cells that have been induced to switch to various Ig isotypes.

It is found in the nucleus. The protein localises to the nucleolus. Its subcellular location is the nucleoplasm. The protein resides in the cytoplasm. It localises to the cytoskeleton. It is found in the microtubule organizing center. The protein localises to the centrosome. Functionally, involved in diverse cellular processes such as ribosome biogenesis, centrosome duplication, protein chaperoning, histone assembly, cell proliferation, and regulation of tumor suppressors p53/TP53 and ARF. Binds ribosome presumably to drive ribosome nuclear export. Associated with nucleolar ribonucleoprotein structures and bind single-stranded nucleic acids. Acts as a chaperonin for the core histones H3, H2B and H4. Stimulates APEX1 endonuclease activity on apurinic/apyrimidinic (AP) double-stranded DNA but inhibits APEX1 endonuclease activity on AP single-stranded RNA. May exert a control of APEX1 endonuclease activity within nucleoli devoted to repair AP on rDNA and the removal of oxidized rRNA molecules. In concert with BRCA2, regulates centrosome duplication. Regulates centriole duplication: phosphorylation by PLK2 is able to trigger centriole replication. Negatively regulates the activation of EIF2AK2/PKR and suppresses apoptosis through inhibition of EIF2AK2/PKR autophosphorylation. Antagonizes the inhibitory effect of ATF5 on cell proliferation and relieves ATF5-induced G2/M blockade. In complex with MYC enhances the transcription of MYC target genes. May act as chaperonin or cotransporter in the nucleolar localization of transcription termination factor TTF1. The protein is Nucleophosmin (Npm1) of Mus musculus (Mouse).